Reading from the N-terminus, the 81-residue chain is Beta-toxin Ct13 (81 aa).

The signal sequence occupies residues 1–18 (MKVLILIIASVLLIGVEC). The region spanning 19–78 (KDGFPVDSEGCILLPCATRAYCSVNCKFMKGSGGSCDTLACHCKGLPEDAKVQDKPTNKC) is the LCN-type CS-alpha/beta domain. Intrachain disulfides connect Cys-29-Cys-78, Cys-34-Cys-54, Cys-40-Cys-59, and Cys-44-Cys-61. Position 78 is a cysteine amide (Cys-78).

The protein belongs to the long (4 C-C) scorpion toxin superfamily. Sodium channel inhibitor family. Beta subfamily. As to expression, expressed by the venom gland.

The protein localises to the secreted. Functionally, beta toxins bind voltage-independently at site-4 of sodium channels (Nav) and shift the voltage of activation toward more negative potentials thereby affecting sodium channel activation and promoting spontaneous and repetitive firing. In Centruroides tecomanus (Scorpion), this protein is Beta-toxin Ct13.